We begin with the raw amino-acid sequence, 369 residues long: Cyclin-I2 (369 aa).

Residues 1 to 116 (MASGAQLPPQ…SRKPRNLEGD (116 aa)) form a disordered region. Composition is skewed to low complexity over residues 64 to 76 (AASLHAASAAVPV) and 83 to 101 (APAGKTADAVPAAAPEQAP).

This sequence belongs to the cyclin family.

This chain is Cyclin-I2 (CCNI2), found in Homo sapiens (Human).